The following is a 1462-amino-acid chain: uncharacterized protein (1462 aa).

The helical transmembrane segment at 119–139 threads the bilayer; that stretch reads TGYITSLCLSAILKFFSFRII. A phosphoserine mark is found at Ser411 and Ser420. The SEC7 domain occupies 541–730; the sequence is TLIESKKRKA…SEIYKAIKEN (190 aa). The stretch at 1102 to 1139 is one HEAT repeat; sequence ENSEDWGLFSKLCNLLNDKNIVVRNQSLSLFHQLVNKY.

It is found in the cytoplasm. The protein localises to the golgi apparatus membrane. This is an uncharacterized protein from Schizosaccharomyces pombe (strain 972 / ATCC 24843) (Fission yeast).